Here is a 262-residue protein sequence, read N- to C-terminus: uncharacterized protein (262 aa).

An N-terminal signal peptide occupies residues 1-22 (MGYLKRFALYISVMILIFAIAG). The N-palmitoyl cysteine moiety is linked to residue cysteine 23. Cysteine 23 carries the S-diacylglycerol cysteine lipid modification.

The protein belongs to the staphylococcal tandem lipoprotein family.

The protein resides in the cell membrane. This is an uncharacterized protein from Staphylococcus aureus (strain NCTC 8325 / PS 47).